The following is a 196-amino-acid chain: Peptidyl-tRNA hydrolase (196 aa).

Y17 is a tRNA binding site. The active-site Proton acceptor is the H22. TRNA is bound by residues F68, N70, and N116.

It belongs to the PTH family. Monomer.

The protein localises to the cytoplasm. It carries out the reaction an N-acyl-L-alpha-aminoacyl-tRNA + H2O = an N-acyl-L-amino acid + a tRNA + H(+). Its function is as follows. Hydrolyzes ribosome-free peptidyl-tRNAs (with 1 or more amino acids incorporated), which drop off the ribosome during protein synthesis, or as a result of ribosome stalling. Catalyzes the release of premature peptidyl moieties from peptidyl-tRNA molecules trapped in stalled 50S ribosomal subunits, and thus maintains levels of free tRNAs and 50S ribosomes. The chain is Peptidyl-tRNA hydrolase from Yersinia pseudotuberculosis serotype O:1b (strain IP 31758).